A 189-amino-acid polypeptide reads, in one-letter code: Protein GrpE (189 aa).

The segment covering 1 to 10 (MADEQQQTLD) has biased composition (polar residues). The disordered stretch occupies residues 1-21 (MADEQQQTLDPQAPEQTDAPE).

Belongs to the GrpE family. Homodimer.

It localises to the cytoplasm. Participates actively in the response to hyperosmotic and heat shock by preventing the aggregation of stress-denatured proteins, in association with DnaK and GrpE. It is the nucleotide exchange factor for DnaK and may function as a thermosensor. Unfolded proteins bind initially to DnaJ; upon interaction with the DnaJ-bound protein, DnaK hydrolyzes its bound ATP, resulting in the formation of a stable complex. GrpE releases ADP from DnaK; ATP binding to DnaK triggers the release of the substrate protein, thus completing the reaction cycle. Several rounds of ATP-dependent interactions between DnaJ, DnaK and GrpE are required for fully efficient folding. In Pseudomonas paraeruginosa (strain DSM 24068 / PA7) (Pseudomonas aeruginosa (strain PA7)), this protein is Protein GrpE.